The chain runs to 645 residues: Cell pattern formation-associated protein stuA (645 aa).

Residues 1-52 (MNQMQPYADVHQPHMSTAAHAPASGPPAGLSHYSYPHQPSMMQPQQQQHQYG) form a disordered region. Residues 18–52 (AAHAPASGPPAGLSHYSYPHQPSMMQPQQQQHQYG) are compositionally biased toward low complexity. The region spanning 124-230 (RVTATLWEDE…HDIGALLYHP (107 aa)) is the HTH APSES-type domain. The segment at residues 158–179 (GTKLLNVAGMTRGRRDGILKSE) is a DNA-binding region (H-T-H motif). Positions 246 to 645 (VDRNRRPDSM…HTLAAQRARR (400 aa)) are disordered. Composition is skewed to polar residues over residues 254–271 (SMQT…SQAP) and 279–288 (MTNSVGSAMS). Low complexity predominate over residues 317-330 (SASSMMGMGNQGSS). The segment covering 336–365 (ANVQQHPQGNQPLSIDTGLSNARSVPTTPA) has biased composition (polar residues). The segment covering 469 to 481 (PYNGNRGPYGYNP) has biased composition (low complexity). Composition is skewed to polar residues over residues 502–542 (SPHQ…NLYN) and 569–584 (YASQ…NSSG). A nuclear localization domain region spans residues 585-613 (KRGRDEEDAETYRPDSVQGDDMGGLKRRK). Positions 586-597 (RGRDEEDAETYR) are enriched in basic and acidic residues.

This sequence belongs to the EFG1/PHD1/stuA family.

The protein resides in the nucleus. In terms of biological role, transcription factor that regulates asexual reproduction. Binds the StuA-response elements (StRE) with the consensus sequence 5'-(A/T)CGCG(T/A)N(A/C)-3' at the promoters of target genes. Regulates the expression of several effector genes (AvrLm1, AvrLm6 and AvrLm4-7) during infection stage. The polypeptide is Cell pattern formation-associated protein stuA (Leptosphaeria maculans (strain JN3 / isolate v23.1.3 / race Av1-4-5-6-7-8) (Blackleg fungus)).